The following is a 238-amino-acid chain: Sugar fermentation stimulation protein homolog (238 aa).

It belongs to the SfsA family.

This is Sugar fermentation stimulation protein homolog from Haemophilus influenzae (strain PittGG).